The primary structure comprises 373 residues: Spore coat polysaccharide biosynthesis protein SpsE (373 aa).

The AFP-like domain maps to 305-367 (GIFTTAPIQK…GIVWDDILLK (63 aa)).

It participates in spore coat biogenesis; spore coat polysaccharide biosynthesis. The protein is Spore coat polysaccharide biosynthesis protein SpsE (spsE) of Bacillus subtilis (strain 168).